We begin with the raw amino-acid sequence, 166 residues long: Specificity protein transcription factor 2 (166 aa).

The interval Ser-17–Ala-45 is disordered. The span at Pro-31 to Ser-42 shows a compositional bias: low complexity. 3 consecutive C2H2-type zinc fingers follow at residues His-77 to His-101, Phe-107 to His-131, and Phe-137 to His-160.

It belongs to the Sp1 C2H2-type zinc-finger protein family.

Functionally, transcription factor. Probably acts downstream of the Wnt signaling pathway. This Caenorhabditis elegans protein is Specificity protein transcription factor 2.